Here is a 278-residue protein sequence, read N- to C-terminus: tRNA pseudouridine synthase A (278 aa).

The Nucleophile role is filled by D51. Y109 contacts substrate.

Belongs to the tRNA pseudouridine synthase TruA family. Homodimer.

The catalysed reaction is uridine(38/39/40) in tRNA = pseudouridine(38/39/40) in tRNA. Its function is as follows. Formation of pseudouridine at positions 38, 39 and 40 in the anticodon stem and loop of transfer RNAs. This is tRNA pseudouridine synthase A from Paracidovorax citrulli (strain AAC00-1) (Acidovorax citrulli).